A 103-amino-acid chain; its full sequence is UPF0145 protein BCE_5284 (103 aa).

Belongs to the UPF0145 family.

This chain is UPF0145 protein BCE_5284, found in Bacillus cereus (strain ATCC 10987 / NRS 248).